A 247-amino-acid chain; its full sequence is UDP-2,3-diacylglucosamine hydrolase (247 aa).

Mn(2+)-binding residues include aspartate 8, histidine 10, aspartate 41, asparagine 79, and histidine 114. 79-80 (NR) serves as a coordination point for substrate. Substrate is bound by residues aspartate 122, serine 160, aspartate 171, arginine 174, and histidine 202. Residues histidine 202 and histidine 204 each coordinate Mn(2+).

It belongs to the LpxH family. Mn(2+) serves as cofactor.

Its subcellular location is the cell inner membrane. The catalysed reaction is UDP-2-N,3-O-bis[(3R)-3-hydroxytetradecanoyl]-alpha-D-glucosamine + H2O = 2-N,3-O-bis[(3R)-3-hydroxytetradecanoyl]-alpha-D-glucosaminyl 1-phosphate + UMP + 2 H(+). Its pathway is glycolipid biosynthesis; lipid IV(A) biosynthesis; lipid IV(A) from (3R)-3-hydroxytetradecanoyl-[acyl-carrier-protein] and UDP-N-acetyl-alpha-D-glucosamine: step 4/6. Its function is as follows. Hydrolyzes the pyrophosphate bond of UDP-2,3-diacylglucosamine to yield 2,3-diacylglucosamine 1-phosphate (lipid X) and UMP by catalyzing the attack of water at the alpha-P atom. Involved in the biosynthesis of lipid A, a phosphorylated glycolipid that anchors the lipopolysaccharide to the outer membrane of the cell. In Xanthomonas axonopodis pv. citri (strain 306), this protein is UDP-2,3-diacylglucosamine hydrolase.